Here is a 352-residue protein sequence, read N- to C-terminus: Phenylalanine--tRNA ligase alpha subunit (352 aa).

Glu-258 contacts Mg(2+).

It belongs to the class-II aminoacyl-tRNA synthetase family. Phe-tRNA synthetase alpha subunit type 1 subfamily. Tetramer of two alpha and two beta subunits. Requires Mg(2+) as cofactor.

The protein localises to the cytoplasm. It carries out the reaction tRNA(Phe) + L-phenylalanine + ATP = L-phenylalanyl-tRNA(Phe) + AMP + diphosphate + H(+). This is Phenylalanine--tRNA ligase alpha subunit from Staphylococcus aureus (strain NCTC 8325 / PS 47).